A 223-amino-acid chain; its full sequence is Neurotrophic factor BDNF precursor form (223 aa).

An N-terminal signal peptide occupies residues 1-5; the sequence is SCMKA. The propeptide occupies 6-114; sequence APMKEVSIRG…AANMSMRVRR (109 aa). Asn107 carries N-linked (GlcNAc...) asparagine glycosylation. Intrachain disulfides connect Cys127–Cys194 and Cys172–Cys223.

It belongs to the NGF-beta family.

Its subcellular location is the secreted. Functionally, promotes the survival of neuronal populations that are all located either in the central nervous system or directly connected to it. This is Neurotrophic factor BDNF precursor form (BDNF) from Chilabothrus striatus (Haitian boa constrictor).